Consider the following 114-residue polypeptide: Large ribosomal subunit protein uL18 (114 aa).

This sequence belongs to the universal ribosomal protein uL18 family. Part of the 50S ribosomal subunit; part of the 5S rRNA/L5/L18/L25 subcomplex. Contacts the 5S and 23S rRNAs.

Its function is as follows. This is one of the proteins that bind and probably mediate the attachment of the 5S RNA into the large ribosomal subunit, where it forms part of the central protuberance. The chain is Large ribosomal subunit protein uL18 from Porphyromonas gingivalis (strain ATCC 33277 / DSM 20709 / CIP 103683 / JCM 12257 / NCTC 11834 / 2561).